The primary structure comprises 465 residues: Ribulose bisphosphate carboxylase large chain (465 aa).

Lysine 4 is subject to N6,N6,N6-trimethyllysine. Substrate is bound by residues asparagine 113 and threonine 163. The active-site Proton acceptor is lysine 165. Lysine 167 provides a ligand contact to substrate. Mg(2+)-binding residues include lysine 191, aspartate 193, and glutamate 194. Position 191 is an N6-carboxylysine (lysine 191). Histidine 284 (proton acceptor) is an active-site residue. Substrate is bound by residues arginine 285, histidine 317, and serine 369.

It belongs to the RuBisCO large chain family. Type I subfamily. In terms of assembly, heterohexadecamer of 8 large chains and 8 small chains; disulfide-linked. The disulfide link is formed within the large subunit homodimers. It depends on Mg(2+) as a cofactor. Post-translationally, the disulfide bond which can form in the large chain dimeric partners within the hexadecamer appears to be associated with oxidative stress and protein turnover.

It is found in the plastid. Its subcellular location is the chloroplast. The catalysed reaction is 2 (2R)-3-phosphoglycerate + 2 H(+) = D-ribulose 1,5-bisphosphate + CO2 + H2O. The enzyme catalyses D-ribulose 1,5-bisphosphate + O2 = 2-phosphoglycolate + (2R)-3-phosphoglycerate + 2 H(+). Its function is as follows. RuBisCO catalyzes two reactions: the carboxylation of D-ribulose 1,5-bisphosphate, the primary event in carbon dioxide fixation, as well as the oxidative fragmentation of the pentose substrate in the photorespiration process. Both reactions occur simultaneously and in competition at the same active site. The protein is Ribulose bisphosphate carboxylase large chain of Morella cerifera (Wax myrtle).